Consider the following 122-residue polypeptide: Small ribosomal subunit protein uS13 (122 aa).

Residues 99–122 (RGQRTHTNARTRKGPAKAIAGKKK) are disordered.

Belongs to the universal ribosomal protein uS13 family. In terms of assembly, part of the 30S ribosomal subunit. Forms a loose heterodimer with protein S19. Forms two bridges to the 50S subunit in the 70S ribosome.

In terms of biological role, located at the top of the head of the 30S subunit, it contacts several helices of the 16S rRNA. In the 70S ribosome it contacts the 23S rRNA (bridge B1a) and protein L5 of the 50S subunit (bridge B1b), connecting the 2 subunits; these bridges are implicated in subunit movement. Contacts the tRNAs in the A and P-sites. The sequence is that of Small ribosomal subunit protein uS13 from Cereibacter sphaeroides (strain ATCC 17025 / ATH 2.4.3) (Rhodobacter sphaeroides).